Reading from the N-terminus, the 171-residue chain is Shikimate kinase (171 aa).

14-19 (GAGKST) contributes to the ATP binding site. Ser-18 is a Mg(2+) binding site. Positions 36, 60, and 82 each coordinate substrate. Arg-120 is an ATP binding site. Position 139 (Arg-139) interacts with substrate. Gln-156 lines the ATP pocket.

This sequence belongs to the shikimate kinase family. In terms of assembly, monomer. Mg(2+) is required as a cofactor.

Its subcellular location is the cytoplasm. It carries out the reaction shikimate + ATP = 3-phosphoshikimate + ADP + H(+). It functions in the pathway metabolic intermediate biosynthesis; chorismate biosynthesis; chorismate from D-erythrose 4-phosphate and phosphoenolpyruvate: step 5/7. Functionally, catalyzes the specific phosphorylation of the 3-hydroxyl group of shikimic acid using ATP as a cosubstrate. In Alteromonas mediterranea (strain DSM 17117 / CIP 110805 / LMG 28347 / Deep ecotype), this protein is Shikimate kinase.